A 712-amino-acid chain; its full sequence is BTB/POZ domain-containing protein 18 (712 aa).

One can recognise a BTB domain in the interval 34-102 (CDVLLQAEGE…LYTSEMEVSQ (69 aa)). 3 disordered regions span residues 157–176 (VTPSHHPHTPLPTNQTPCPL), 212–355 (RACP…EGQV), and 374–410 (ETPLKNTQDSPQIPDPGGDFQEPSGTQPFSSNEQEMS). Polar residues predominate over residues 218-228 (QEKNSSPSSHS). The segment covering 229–238 (QEPRENKNDT) has biased composition (basic and acidic residues). The segment covering 277–288 (SKPSSILSGSSS) has biased composition (low complexity). Over residues 303–313 (VNKETPEDKPK) the composition is skewed to basic and acidic residues. Residues 396 to 410 (PSGTQPFSSNEQEMS) are compositionally biased toward polar residues. 3 positions are modified to phosphoserine: Ser-420, Ser-671, and Ser-672. Disordered regions lie at residues 653-676 (KAGKEVSGHSELLGSLPASSEEEE) and 691-712 (TTVPSVWPDPSSESETEVDILT). Over residues 702–712 (SESETEVDILT) the composition is skewed to acidic residues.

The protein localises to the nucleus. Functionally, specifically required during spermatogenesis to promote expression of piRNA precursors. The piRNA metabolic process mediates the repression of transposable elements during meiosis by forming complexes composed of piRNAs and Piwi proteins and governs the methylation and subsequent repression of transposons, which is essential for the germline integrity. Acts by facilitating transcription elongation at piRNA loci during pachytene. This is BTB/POZ domain-containing protein 18 from Homo sapiens (Human).